The chain runs to 512 residues: Nuclear fusion protein FUS1 (512 aa).

The chain crosses the membrane as a helical span at residues 72 to 96; the sequence is IGLSIGLPIGIFCFGLLILLCYFYL. The tract at residues 97–512 is hydrophilic; it reads KRNSVSISNP…VPGDCLQEYD (416 aa). Threonine 178 carries the post-translational modification Phosphothreonine. Serine 190 and serine 256 each carry phosphoserine. Threonine 281 and threonine 424 each carry phosphothreonine. Residues 436–512 form the SH3 domain; that stretch reads QLGKTYTVIQ…VPGDCLQEYD (77 aa).

O-glycosylated.

The protein resides in the membrane. In terms of biological role, required for cell fusion. Negatively regulates Sho1p signaling to ensure efficient cell fusion. Functionally, interacts with SHO1. The chain is Nuclear fusion protein FUS1 (FUS1) from Saccharomyces cerevisiae (strain ATCC 204508 / S288c) (Baker's yeast).